Here is a 1461-residue protein sequence, read N- to C-terminus: Autotransporter adhesin SadA (1461 aa).

The first 54 residues, 1 to 54 (MNRIFKVLWNAATGTFVVTSETAKSRGKKNGRRKLAVSALIGLSSIMVSADALA), serve as a signal peptide directing secretion. The tract at residues 55 to 1372 (NAGNDTGDGV…EEANTYTDQK (1318 aa)) is surface exposed passenger domain. Residues 1373-1461 (MGEMNSKIKG…SAAIGAGFQW (89 aa)) form a translocator domain region. Transmembrane regions (beta stranded) follow at residues 1407 to 1417 (GANMTSIAGGT), 1421 to 1431 (ESAVAIGVSMV), 1440 to 1446 (KLQGTSN), and 1450 to 1461 (DYSAAIGAGFQW).

The protein belongs to the autotransporter-2 (AT-2) (TC 1.B.40) family. As to quaternary structure, homotrimer.

The protein localises to the cell surface. Its subcellular location is the cell outer membrane. Its function is as follows. Involved in cell aggregation, biofilm formation, and adhesion to human intestinal epithelial cells. The sequence is that of Autotransporter adhesin SadA from Salmonella typhimurium (strain LT2 / SGSC1412 / ATCC 700720).